The sequence spans 82 residues: Small ribosomal subunit protein bS18 (82 aa).

Residues 1 to 20 (MVDINQIPTRRPFHRRRKTC) form a disordered region.

This sequence belongs to the bacterial ribosomal protein bS18 family. Part of the 30S ribosomal subunit. Forms a tight heterodimer with protein bS6.

Functionally, binds as a heterodimer with protein bS6 to the central domain of the 16S rRNA, where it helps stabilize the platform of the 30S subunit. The protein is Small ribosomal subunit protein bS18 of Mesorhizobium japonicum (strain LMG 29417 / CECT 9101 / MAFF 303099) (Mesorhizobium loti (strain MAFF 303099)).